The chain runs to 198 residues: Ion-translocating oxidoreductase complex subunit B (198 aa).

The interval 1–28 (MIITTVYFILVAIAVLALIFGAILGFAS) is hydrophobic. The region spanning 34 to 92 (EADPIVEKIDALLPQSQCGQCGYPGCKPYAEAIANGDDITKCIPGGQTVIVNIAELMGV) is the 4Fe-4S domain. The [4Fe-4S] cluster site is built by Cys51, Cys54, Cys59, Cys75, Cys115, Cys118, Cys121, Cys125, Cys145, Cys148, Cys151, and Cys155. 2 consecutive 4Fe-4S ferredoxin-type domains span residues 106-135 (MVAF…GTNK) and 136-165 (AMHT…MIKV).

Belongs to the 4Fe4S bacterial-type ferredoxin family. RnfB subfamily. The complex is composed of six subunits: RnfA, RnfB, RnfC, RnfD, RnfE and RnfG. [4Fe-4S] cluster is required as a cofactor.

The protein localises to the cell inner membrane. Part of a membrane-bound complex that couples electron transfer with translocation of ions across the membrane. The chain is Ion-translocating oxidoreductase complex subunit B from Pasteurella multocida (strain Pm70).